Here is a 289-residue protein sequence, read N- to C-terminus: Acetyl-coenzyme A carboxylase carboxyl transferase subunit beta (289 aa).

The CoA carboxyltransferase N-terminal domain occupies 34–289 (MWVKCNKCGE…KLINMHQNSF (256 aa)). Positions 38, 41, 57, and 60 each coordinate Zn(2+). The C4-type zinc finger occupies 38 to 60 (CNKCGEILYQNDLEKNYMVCNLC).

It belongs to the AccD/PCCB family. In terms of assembly, acetyl-CoA carboxylase is a heterohexamer composed of biotin carboxyl carrier protein (AccB), biotin carboxylase (AccC) and two subunits each of ACCase subunit alpha (AccA) and ACCase subunit beta (AccD). Zn(2+) serves as cofactor.

It is found in the cytoplasm. It carries out the reaction N(6)-carboxybiotinyl-L-lysyl-[protein] + acetyl-CoA = N(6)-biotinyl-L-lysyl-[protein] + malonyl-CoA. Its pathway is lipid metabolism; malonyl-CoA biosynthesis; malonyl-CoA from acetyl-CoA: step 1/1. In terms of biological role, component of the acetyl coenzyme A carboxylase (ACC) complex. Biotin carboxylase (BC) catalyzes the carboxylation of biotin on its carrier protein (BCCP) and then the CO(2) group is transferred by the transcarboxylase to acetyl-CoA to form malonyl-CoA. This Clostridium botulinum (strain Kyoto / Type A2) protein is Acetyl-coenzyme A carboxylase carboxyl transferase subunit beta.